The sequence spans 200 residues: MKIGIIAYQGSFEEHYLQLKRAFDKWSINGEITPVKIPKDLKDIDGVIIPGGESTTIGLVAKRLGILDELKEKITSGLPVMGTCAGAIMLAKEVSDAKVGKTSQPLIGTMNISIIRNYYGRQRESFETIIDLSKIGKGKANVVFIRAPAITKLWGKAQSLAELNGVTVLAEENNILATTFHPELSDTTSIHEYFLHLVKG.

Residue Gly-52 to Ser-54 participates in L-glutamine binding. Cys-84 (nucleophile) is an active-site residue. L-glutamine contacts are provided by residues Arg-116 and Ile-145–Arg-146. Active-site charge relay system residues include His-181 and Glu-183.

Belongs to the glutaminase PdxT/SNO family. As to quaternary structure, in the presence of PdxS, forms a dodecamer of heterodimers. Only shows activity in the heterodimer.

It catalyses the reaction aldehydo-D-ribose 5-phosphate + D-glyceraldehyde 3-phosphate + L-glutamine = pyridoxal 5'-phosphate + L-glutamate + phosphate + 3 H2O + H(+). It carries out the reaction L-glutamine + H2O = L-glutamate + NH4(+). Its pathway is cofactor biosynthesis; pyridoxal 5'-phosphate biosynthesis. In terms of biological role, catalyzes the hydrolysis of glutamine to glutamate and ammonia as part of the biosynthesis of pyridoxal 5'-phosphate. The resulting ammonia molecule is channeled to the active site of PdxS. This chain is Pyridoxal 5'-phosphate synthase subunit PdxT, found in Saccharolobus islandicus (strain L.S.2.15 / Lassen #1) (Sulfolobus islandicus).